Here is a 309-residue protein sequence, read N- to C-terminus: Probable lipid kinase YegS-like (309 aa).

The 134-residue stretch at 1–134 (MAPSHWRLIL…VDLLRIDADH (134 aa)) folds into the DAGKc domain. ATP contacts are provided by residues T39, 65–71 (GDGTLSE), and T96. Mg(2+) contacts are provided by L219, D222, and L224. E280 acts as the Proton acceptor in catalysis.

Belongs to the diacylglycerol/lipid kinase family. YegS lipid kinase subfamily. The cofactor is Mg(2+). It depends on Ca(2+) as a cofactor.

The protein resides in the cytoplasm. In terms of biological role, probably phosphorylates lipids; the in vivo substrate is unknown. In Xanthomonas axonopodis pv. citri (strain 306), this protein is Probable lipid kinase YegS-like.